Here is a 141-residue protein sequence, read N- to C-terminus: 3-hydroxyacyl-[acyl-carrier-protein] dehydratase FabZ (141 aa).

H48 is an active-site residue.

The protein belongs to the thioester dehydratase family. FabZ subfamily.

It is found in the cytoplasm. It carries out the reaction a (3R)-hydroxyacyl-[ACP] = a (2E)-enoyl-[ACP] + H2O. Involved in unsaturated fatty acids biosynthesis. Catalyzes the dehydration of short chain beta-hydroxyacyl-ACPs and long chain saturated and unsaturated beta-hydroxyacyl-ACPs. The protein is 3-hydroxyacyl-[acyl-carrier-protein] dehydratase FabZ of Bacillus subtilis (strain 168).